The following is a 468-amino-acid chain: 6-phosphogluconate dehydrogenase, decarboxylating (468 aa).

NADP(+) is bound by residues 10–15 (GMAVMG), 33–35 (NRS), 74–76 (VKA), and Asn-102. Residues Asn-102 and 128 to 130 (SGG) contribute to the substrate site. Lys-183 serves as the catalytic Proton acceptor. 186–187 (HN) provides a ligand contact to substrate. Glu-190 functions as the Proton donor in the catalytic mechanism. 5 residues coordinate substrate: Tyr-191, Lys-260, Arg-287, Arg-445, and His-451.

This sequence belongs to the 6-phosphogluconate dehydrogenase family. In terms of assembly, homodimer.

It catalyses the reaction 6-phospho-D-gluconate + NADP(+) = D-ribulose 5-phosphate + CO2 + NADPH. It participates in carbohydrate degradation; pentose phosphate pathway; D-ribulose 5-phosphate from D-glucose 6-phosphate (oxidative stage): step 3/3. Its function is as follows. Catalyzes the oxidative decarboxylation of 6-phosphogluconate to ribulose 5-phosphate and CO(2), with concomitant reduction of NADP to NADPH. The sequence is that of 6-phosphogluconate dehydrogenase, decarboxylating (gnd) from Shigella flexneri.